Consider the following 1218-residue polypeptide: Protein jagged-1 (1218 aa).

Positions 1–33 (MRSPRTRGRPGRPLSLLLALLCALRAKVCGASG) are cleaved as a signal peptide. The Extracellular portion of the chain corresponds to 34-1067 (QFELEILSMQ…QRRPLKNRTD (1034 aa)). N-linked (GlcNAc...) asparagine glycosylation occurs at N143. One can recognise a DSL domain in the interval 185 to 229 (VTCDDHYYGFGCNKFCRPRDDFFGHYACDQNGNKTCMEGWMGPDC). 2 cysteine pairs are disulfide-bonded: C187/C196 and C200/C212. The important for interaction with NOTCH1 stretch occupies residues 199 to 207 (FCRPRDDFF). N217 is a glycosylation site (N-linked (GlcNAc...) asparagine). 40 disulfide bridges follow: C220/C229, C234/C245, C238/C251, C253/C262, C265/C276, C271/C282, C284/C293, C300/C312, C306/C322, C324/C333, C340/C351, C345/C360, C362/C371, C378/C389, C383/C398, C400/C409, C416/C427, C421/C436, C438/C447, C454/C464, C458/C473, C475/C484, C491/C502, C496/C511, C513/C522, C529/C540, C534/C549, C551/C560, C578/C605, C599/C615, C617/C626, C633/C644, C638/C653, C655/C664, C671/C682, C676/C691, C693/C702, C709/C720, C714/C729, and C731/C740. In terms of domain architecture, EGF-like 1 spans 230–263 (NKAICRQGCSPKHGSCKLPGDCRCQYGWQGLYCD). The region spanning 264–294 (KCIPHPGCVHGTCNEPWQCLCETNWGGQLCD) is the EGF-like 2; atypical domain. EGF-like domains lie at 296–334 (DLNY…PNCE) and 336–372 (AEHA…PTCS). One can recognise an EGF-like 5; calcium-binding domain in the interval 374–410 (NIDDCSPNNCSHGGTCQDLVNGFKCVCPPQWTGKTCQ). The N-linked (GlcNAc...) asparagine glycan is linked to N382. One can recognise an EGF-like 6; calcium-binding domain in the interval 412–448 (DANECEAKPCVNARSCKNLIASYYCDCLPGWMGQNCD). The region spanning 450–485 (NINDCLGQCQNDASCRDLVNGYRCICPPGYAGDHCE) is the EGF-like 7; calcium-binding domain. Residues 487 to 523 (DIDECASNPCLNGGHCQNEINRFQCLCPTGFSGNLCQ) enclose the EGF-like 8; calcium-binding domain. EGF-like domains follow at residues 525–561 (DIDY…KNCS) and 586–627 (DTPE…TYCH). N559 carries an N-linked (GlcNAc...) asparagine glycan. Positions 629-665 (NINDCESNPCKNGGTCIDGVNSYKCICSDGWEGAHCE) constitute an EGF-like 11; calcium-binding domain. The 37-residue stretch at 667–703 (NINDCSQNPCHYGGTCRDLVNDFYCDCKNGWKGKTCH) folds into the EGF-like 12; calcium-binding domain. EGF-like domains are found at residues 705-741 (RDSQ…TTCN) and 744-780 (RNSS…PICT). A glycan (N-linked (GlcNAc...) asparagine) is linked at N745. Intrachain disulfides connect C748-C759, C753-C768, C770-C779, C786-C797, C791-C806, C808-C817, C824-C835, C829-C844, and C846-C855. In terms of domain architecture, EGF-like 15; calcium-binding spans 782-818 (NTNDCSPHPCYNSGTCVDGDNWYRCECAPGFAGPDCR). Residues 820-856 (NINECQSSPCAFGATCVDEINGYQCICPPGHSGAKCH) form the EGF-like 16; calcium-binding domain. N960, N991, N1045, and N1064 each carry an N-linked (GlcNAc...) asparagine glycan. Residues 1068–1093 (FLVPLLSSVLTVAWVCCLVTAFYWCV) form a helical membrane-spanning segment. The Cytoplasmic segment spans residues 1094-1218 (RKRRKPSSHT…QSLNRMEYIV (125 aa)). Positions 1181–1218 (REEKAPSGTPTKHPNWTNKQDNRDLESAQSLNRMEYIV) are disordered. Residues 1188–1199 (GTPTKHPNWTNK) are compositionally biased toward polar residues.

Interacts with NOTCH1, NOTCH2 and NOTCH3. In terms of tissue distribution, widely expressed in many tissues, with highest expression in brain, heart, muscle and thymus.

It localises to the membrane. The protein resides in the cell membrane. Ligand for multiple Notch receptors and involved in the mediation of Notch signaling. May be involved in cell-fate decisions during hematopoiesis. Seems to be involved in early and late stages of mammalian cardiovascular development. Inhibits myoblast differentiation. May regulate fibroblast growth factor-induced angiogenesis. The protein is Protein jagged-1 (Jag1) of Mus musculus (Mouse).